The following is a 481-amino-acid chain: ATP synthase subunit beta, chloroplastic (481 aa).

An ATP-binding site is contributed by 163-170 (GGAGVGKT).

This sequence belongs to the ATPase alpha/beta chains family. As to quaternary structure, F-type ATPases have 2 components, CF(1) - the catalytic core - and CF(0) - the membrane proton channel. CF(1) has five subunits: alpha(3), beta(3), gamma(1), delta(1), epsilon(1). CF(0) has four main subunits: a(1), b(1), b'(1) and c(9-12).

Its subcellular location is the plastid. It is found in the chloroplast thylakoid membrane. The catalysed reaction is ATP + H2O + 4 H(+)(in) = ADP + phosphate + 5 H(+)(out). In terms of biological role, produces ATP from ADP in the presence of a proton gradient across the membrane. The catalytic sites are hosted primarily by the beta subunits. This Tupiella akineta (Green alga) protein is ATP synthase subunit beta, chloroplastic.